We begin with the raw amino-acid sequence, 1203 residues long: Cingulin (1203 aa).

Residues 7 to 357 (MAEPRGPVDH…VMISSGSTKA (351 aa)) are head. Residues 25-48 (EPVSGAEMGTLRRGGRRPAKDARA) are disordered. The short motif at 48–62 (ASTYGVAVRVQGIAG) is the ZIM element. The tract at residues 54 to 67 (AVRVQGIAGQPFVV) is interaction with TJP1/ZO1. Residues 89–268 (EASGALGSDF…PPSGFSRSRQ (180 aa)) form a disordered region. Phosphoserine is present on residues S96, S135, S137, S140, S155, and S165. The segment covering 166–191 (PGSTIDTAPLSSVDSLINKFDSQLGG) has biased composition (polar residues). The segment covering 207–231 (EQRKRSKSLDSRLPRDTLEERERQS) has biased composition (basic and acidic residues). Phosphoserine occurs at positions 214, 217, 258, 276, 338, and 351. A compositionally biased stretch (low complexity) spans 246-267 (GSSKQPSQSQSPSPPSGFSRSR). Residues 358–1160 (VAGQGELTRK…SLEKDSWRKA (803 aa)) are a coiled coil. N6-acetyllysine is present on K579. Basic and acidic residues predominate over residues 883–903 (ARREVADAQRQAKDWASEAEK). 2 disordered regions span residues 883 to 908 (ARREVADAQRQAKDWASEAEKTSGGL) and 1160 to 1181 (ASRSAAESALKHEGLSSDEEFD). Residues 1161-1203 (SRSAAESALKHEGLSSDEEFDSVYDPSSIASLLTESNLQTSSC) are tail. 3 positions are modified to phosphoserine: S1175, S1176, and S1182.

This sequence belongs to the cingulin family. As to quaternary structure, homodimer. Interacts with TJP1/ZO1 and SPEF1.

Its subcellular location is the cell junction. It is found in the tight junction. Its function is as follows. Probably plays a role in the formation and regulation of the tight junction (TJ) paracellular permeability barrier. The sequence is that of Cingulin from Papio anubis (Olive baboon).